The chain runs to 70 residues: Conotoxin TxMMSK-02 (70 aa).

The first 20 residues, 1-20, serve as a signal peptide directing secretion; that stretch reads MMSKLGALLTICLLLFSLTA. The propeptide occupies 21-53; the sequence is VPLDGDQHADQPAQRLQDRIPTEDHPLFDPNKR. Intrachain disulfides connect cysteine 54-cysteine 68, cysteine 55-cysteine 64, and cysteine 60-cysteine 67. 4-hydroxyproline is present on proline 66. Tyrosine 69 is subject to Tyrosine amide.

Belongs to the conotoxin M superfamily. Expressed by the venom duct.

It localises to the secreted. This chain is Conotoxin TxMMSK-02, found in Conus textile (Cloth-of-gold cone).